The primary structure comprises 179 residues: Large ribosomal subunit protein uL6 (179 aa).

Belongs to the universal ribosomal protein uL6 family. As to quaternary structure, part of the 50S ribosomal subunit.

In terms of biological role, this protein binds to the 23S rRNA, and is important in its secondary structure. It is located near the subunit interface in the base of the L7/L12 stalk, and near the tRNA binding site of the peptidyltransferase center. The polypeptide is Large ribosomal subunit protein uL6 (Solidesulfovibrio magneticus (strain ATCC 700980 / DSM 13731 / RS-1) (Desulfovibrio magneticus)).